We begin with the raw amino-acid sequence, 161 residues long: Regulator of ribonuclease activity A (161 aa).

It belongs to the RraA family. In terms of assembly, homotrimer. Binds to both RNA-binding sites in the C-terminal region of Rne and to RhlB.

The protein resides in the cytoplasm. Functionally, globally modulates RNA abundance by binding to RNase E (Rne) and regulating its endonucleolytic activity. Can modulate Rne action in a substrate-dependent manner by altering the composition of the degradosome. Modulates RNA-binding and helicase activities of the degradosome. This Yersinia enterocolitica serotype O:8 / biotype 1B (strain NCTC 13174 / 8081) protein is Regulator of ribonuclease activity A.